A 241-amino-acid chain; its full sequence is Megakaryocyte and platelet inhibitory receptor G6b (241 aa).

The signal sequence occupies residues 1–17 (MAVFLQLLPLLLSRAQG). Over 18-142 (NPGASLDGRP…GPTHGSVYPQ (125 aa)) the chain is Extracellular. Asn32 carries N-linked (GlcNAc...) asparagine glycosylation. The chain crosses the membrane as a helical span at residues 143–163 (LLIPLLGAGLVLGLGALGLVW). The Cytoplasmic portion of the chain corresponds to 164–241 (WLHRRLPPQP…DASTIYAVVV (78 aa)). 2 short sequence motifs (ITIM motif) span residues 209–214 (LLYADL) and 235–240 (TIYAVV). Position 211 is a phosphotyrosine (Tyr211).

As to quaternary structure, interacts (via ITIM motif) with PTPN6 and PTPN11. Binds to heparin. All isoforms are N-glycosylated. Post-translationally, isoform E is O-glycosylated. In terms of processing, phosphorylated. As to expression, expressed in platelets. Expressed in a restricted set of hematopoietic cell lines including the erythroleukemia cell line K-562 and the T-cell leukemia cell lines MOLT-4 and Jurkat. Not detected in the monocyte-like cell line U-937, the B-cell-like cell line Raji, the fibroblast cell lines TK and HeLa, or the natural killer cell lines NKL, NK 62 and YT.

The protein localises to the endoplasmic reticulum. Its subcellular location is the golgi apparatus. It is found in the cell membrane. Functionally, inhibitory receptor that acts as a critical regulator of hematopoietic lineage differentiation, megakaryocyte function and platelet production. Inhibits platelet aggregation and activation by agonists such as ADP and collagen-related peptide. This regulation of megakaryocate function as well as platelet production ann activation is done through the inhibition (via the 2 ITIM motifs) of the receptors CLEC1B and GP6:FcRgamma signaling. Appears to operate in a calcium-independent manner. In terms of biological role, isoform B, displayed in this entry, is the only isoform to contain both a transmembrane region and 2 immunoreceptor tyrosine-based inhibitor motifs (ITIMs) and, thus, the only one which probably has a role of inhibitory receptor. Isoform A may be the activating counterpart of isoform B. The polypeptide is Megakaryocyte and platelet inhibitory receptor G6b (Homo sapiens (Human)).